The sequence spans 403 residues: 1-deoxy-D-xylulose 5-phosphate reductoisomerase (403 aa).

NADPH is bound by residues Thr-18, Gly-19, Ser-20, Ile-21, Gln-46, and Asn-132. Residue Lys-133 participates in 1-deoxy-D-xylulose 5-phosphate binding. Position 134 (Glu-134) interacts with NADPH. Asp-158 provides a ligand contact to Mn(2+). 1-deoxy-D-xylulose 5-phosphate is bound by residues Ser-159, Glu-160, Ser-189, and His-212. Residue Glu-160 coordinates Mn(2+). Gly-218 contributes to the NADPH binding site. 1-deoxy-D-xylulose 5-phosphate-binding residues include Ser-225, Asn-230, Lys-231, and Glu-234. Glu-234 contributes to the Mn(2+) binding site.

Belongs to the DXR family. The cofactor is Mg(2+). Mn(2+) serves as cofactor.

It catalyses the reaction 2-C-methyl-D-erythritol 4-phosphate + NADP(+) = 1-deoxy-D-xylulose 5-phosphate + NADPH + H(+). The protein operates within isoprenoid biosynthesis; isopentenyl diphosphate biosynthesis via DXP pathway; isopentenyl diphosphate from 1-deoxy-D-xylulose 5-phosphate: step 1/6. Catalyzes the NADPH-dependent rearrangement and reduction of 1-deoxy-D-xylulose-5-phosphate (DXP) to 2-C-methyl-D-erythritol 4-phosphate (MEP). The sequence is that of 1-deoxy-D-xylulose 5-phosphate reductoisomerase from Aromatoleum aromaticum (strain DSM 19018 / LMG 30748 / EbN1) (Azoarcus sp. (strain EbN1)).